The sequence spans 136 residues: Aspartate 1-decarboxylase (136 aa).

Residue Ser-25 is the Schiff-base intermediate with substrate; via pyruvic acid of the active site. Residue Ser-25 is modified to Pyruvic acid (Ser). Thr-57 contacts substrate. Tyr-58 (proton donor) is an active-site residue. Gly-73–Ala-75 contacts substrate.

Belongs to the PanD family. In terms of assembly, heterooctamer of four alpha and four beta subunits. Requires pyruvate as cofactor. In terms of processing, is synthesized initially as an inactive proenzyme, which is activated by self-cleavage at a specific serine bond to produce a beta-subunit with a hydroxyl group at its C-terminus and an alpha-subunit with a pyruvoyl group at its N-terminus.

It localises to the cytoplasm. It catalyses the reaction L-aspartate + H(+) = beta-alanine + CO2. The protein operates within cofactor biosynthesis; (R)-pantothenate biosynthesis; beta-alanine from L-aspartate: step 1/1. Functionally, catalyzes the pyruvoyl-dependent decarboxylation of aspartate to produce beta-alanine. The chain is Aspartate 1-decarboxylase from Acidothermus cellulolyticus (strain ATCC 43068 / DSM 8971 / 11B).